The following is a 499-amino-acid chain: Probable alkaline/neutral invertase F (499 aa).

At Ser11 the chain carries Phosphoserine. Position 20 is a phosphothreonine (Thr20). Ser497 is subject to Phosphoserine.

It belongs to the glycosyl hydrolase 100 family.

It carries out the reaction Hydrolysis of terminal non-reducing beta-D-fructofuranoside residues in beta-D-fructofuranosides.. Functionally, invertase that cleaves sucrose into glucose and fructose. The protein is Probable alkaline/neutral invertase F of Arabidopsis thaliana (Mouse-ear cress).